Reading from the N-terminus, the 128-residue chain is Large ribosomal subunit protein bL12 (128 aa).

The protein belongs to the bacterial ribosomal protein bL12 family. Homodimer. Part of the ribosomal stalk of the 50S ribosomal subunit. Forms a multimeric L10(L12)X complex, where L10 forms an elongated spine to which 2 to 4 L12 dimers bind in a sequential fashion. Binds GTP-bound translation factors.

Functionally, forms part of the ribosomal stalk which helps the ribosome interact with GTP-bound translation factors. Is thus essential for accurate translation. This chain is Large ribosomal subunit protein bL12, found in Halorhodospira halophila (strain DSM 244 / SL1) (Ectothiorhodospira halophila (strain DSM 244 / SL1)).